The primary structure comprises 347 residues: MKNNNRPIFPFTAIVGQEEMKLALLLNIVDPKIGGVMIMGDRGTGKSTTIRALADLLPEIDIVANDPFNSHPTDIELMSDNVRQLKENGEEISLIQKKVPMIDLPLGATEDRVCGTIDIEKALTEGVKAFEPGLLAQANRGILYVDEVNLLDDHLVDILLDSAASGWNTVEREGISIRHPARFVLVGSGNPEEGELRPQLLDRFGMHAEIRTVKDPTLRVQIVEERSEFDRSPEDFLQEYKLQQEVLRQRIINAQQQLNNVQLNYEIKVKISQVCSELDVDGLRGDIVTNRAAKALAAFEGRDEVTVDDVLRIITLCLRHRLRKDPLEEIDSGQKVEKVFQRIFSNL.

Position 41 to 48 (41 to 48 (DRGTGKST)) interacts with ATP.

The protein belongs to the Mg-chelatase subunits D/I family.

It is found in the plastid. The protein localises to the cyanelle. The enzyme catalyses protoporphyrin IX + Mg(2+) + ATP + H2O = Mg-protoporphyrin IX + ADP + phosphate + 3 H(+). It participates in porphyrin-containing compound metabolism; chlorophyll biosynthesis. Functionally, involved in chlorophyll biosynthesis; introduces a magnesium ion into protoporphyrin IX to yield Mg-protoporphyrin IX. This Cyanophora paradoxa protein is Magnesium-chelatase subunit ChlI (chlI).